The chain runs to 770 residues: DNA ligase 1 (770 aa).

Low complexity predominate over residues Met1–Gln18. Residues Met1 to Asp27 are disordered. NAD(+) contacts are provided by residues Asp57 to Asp61, Ser106 to Leu107, and Glu142. Lys144 acts as the N6-AMP-lysine intermediate in catalysis. The NAD(+) site is built by Arg165, Glu202, Lys318, and Lys342. Zn(2+) contacts are provided by Cys439, Cys442, Cys458, and Cys464. Positions Ser657–Ala746 constitute a BRCT domain. Residues Gly741–Ala770 form a disordered region. A compositionally biased stretch (acidic residues) spans Ala744–Glu753. Over residues Gln759 to Ala770 the composition is skewed to basic and acidic residues.

The protein belongs to the NAD-dependent DNA ligase family. LigA subfamily. Mg(2+) is required as a cofactor. The cofactor is Mn(2+).

The catalysed reaction is NAD(+) + (deoxyribonucleotide)n-3'-hydroxyl + 5'-phospho-(deoxyribonucleotide)m = (deoxyribonucleotide)n+m + AMP + beta-nicotinamide D-nucleotide.. DNA ligase that catalyzes the formation of phosphodiester linkages between 5'-phosphoryl and 3'-hydroxyl groups in double-stranded DNA using NAD as a coenzyme and as the energy source for the reaction. It is essential for DNA replication and repair of damaged DNA. The sequence is that of DNA ligase 1 from Pseudarthrobacter chlorophenolicus (strain ATCC 700700 / DSM 12829 / CIP 107037 / JCM 12360 / KCTC 9906 / NCIMB 13794 / A6) (Arthrobacter chlorophenolicus).